Consider the following 557-residue polypeptide: Formate--tetrahydrofolate ligase (557 aa).

Position 67-74 (67-74) interacts with ATP; that stretch reads TPAGEGKS.

Belongs to the formate--tetrahydrofolate ligase family.

The catalysed reaction is (6S)-5,6,7,8-tetrahydrofolate + formate + ATP = (6R)-10-formyltetrahydrofolate + ADP + phosphate. Its pathway is one-carbon metabolism; tetrahydrofolate interconversion. The sequence is that of Formate--tetrahydrofolate ligase from Lacticaseibacillus paracasei (strain ATCC 334 / BCRC 17002 / CCUG 31169 / CIP 107868 / KCTC 3260 / NRRL B-441) (Lactobacillus paracasei).